The primary structure comprises 927 residues: Roc-COR-CHAT protease (927 aa).

LRR repeat units follow at residues 38–61, 83–107, 109–125, and 127–151; these read AGQV…TEAQ, LPHL…GFRS, QQVY…VFEG, and CPAL…GFRA. An LRR 5 region spans residues 152–170; it reads LKYIYATNNVLQKITFNRS. LRR repeat units follow at residues 171-194 and 195-217; these read MRLL…LSEI and ETME…IWDR. One can recognise a COR domain in the interval 436–623; it reads EWLGVKEDLN…ELRWKKGVVL (188 aa). Active-site residues include H796 and C840.

Its function is as follows. A dedicated protease for gasdermin bGSDM; cleaves the bGSDM precursor, releasing the pore-forming moiety, which integrates into the membrane and triggers cell death. Probably involved in defense against bacteriophages. Expression of bGSDM and this neighboring protease is highly toxic in E.coli. Cells expressing the gene pair stop dividing and lose membrane integrity. Both proteins are required to kill E.coli. The bGSDM recognition site is larger than the 8 residues surrounding the cleavage site; replacement of the endogenous recognition site by the Runella site (NRVLGENM) in a number of other bGSDMs is not sufficient for them to be cleaved. The chain is Roc-COR-CHAT protease from Runella zeae (strain ATCC BAA-293 / DSM 19591 / LMG 21438 / NS12).